The primary structure comprises 396 residues: S-adenosylmethionine synthase (396 aa).

H14 lines the ATP pocket. Mg(2+) is bound at residue D16. Residue E42 participates in K(+) binding. E55 and Q98 together coordinate L-methionine. The interval 98–108 (QSPDIALGVNK) is flexible loop. ATP contacts are provided by residues 174–176 (DGK), 241–242 (RF), D250, 256–257 (RK), A273, and K277. D250 is an L-methionine binding site. K281 is a binding site for L-methionine.

It belongs to the AdoMet synthase family. In terms of assembly, homotetramer; dimer of dimers. It depends on Mg(2+) as a cofactor. K(+) serves as cofactor.

Its subcellular location is the cytoplasm. The catalysed reaction is L-methionine + ATP + H2O = S-adenosyl-L-methionine + phosphate + diphosphate. It functions in the pathway amino-acid biosynthesis; S-adenosyl-L-methionine biosynthesis; S-adenosyl-L-methionine from L-methionine: step 1/1. Its function is as follows. Catalyzes the formation of S-adenosylmethionine (AdoMet) from methionine and ATP. The overall synthetic reaction is composed of two sequential steps, AdoMet formation and the subsequent tripolyphosphate hydrolysis which occurs prior to release of AdoMet from the enzyme. This Pseudothermotoga lettingae (strain ATCC BAA-301 / DSM 14385 / NBRC 107922 / TMO) (Thermotoga lettingae) protein is S-adenosylmethionine synthase.